The primary structure comprises 241 residues: Uridylate kinase (241 aa).

Residue 12–15 (KLSG) participates in ATP binding. Glycine 54 serves as a coordination point for UMP. Residues glycine 55 and arginine 59 each contribute to the ATP site. UMP is bound by residues aspartate 74 and 135–142 (TGNPFFTT). ATP-binding residues include threonine 162, tyrosine 168, and aspartate 171.

This sequence belongs to the UMP kinase family. Homohexamer.

The protein resides in the cytoplasm. The catalysed reaction is UMP + ATP = UDP + ADP. It functions in the pathway pyrimidine metabolism; CTP biosynthesis via de novo pathway; UDP from UMP (UMPK route): step 1/1. Inhibited by UTP. Functionally, catalyzes the reversible phosphorylation of UMP to UDP. The chain is Uridylate kinase from Magnetococcus marinus (strain ATCC BAA-1437 / JCM 17883 / MC-1).